The primary structure comprises 266 residues: RNA polymerase II subunit A C-terminal domain phosphatase ssu-72 (266 aa).

The interval 1 to 31 is disordered; that stretch reads MSAVDTPTGAASSSKPDQNEQNGQNGGREDS. Residues 9–23 are compositionally biased toward polar residues; that stretch reads GAASSSKPDQNEQNG.

It belongs to the SSU72 phosphatase family. Component of the cleavage and polyadenylation factor (CPF) complex.

Its subcellular location is the nucleus. The catalysed reaction is O-phospho-L-seryl-[protein] + H2O = L-seryl-[protein] + phosphate. It catalyses the reaction O-phospho-L-threonyl-[protein] + H2O = L-threonyl-[protein] + phosphate. Its function is as follows. Processively dephosphorylates Ser-5 of the heptad repeats YSPTSPS in the C-terminal domain of the largest RNA polymerase II subunit (rpb-1). Functionally, component of the cleavage and polyadenylation factor (CPF) complex, which plays a key role in polyadenylation-dependent pre-mRNA 3'-end formation and cooperates with cleavage factors including the CFIA complex and NAB4/CFIB. Ssu-72 is required for 3'-end formation of snoRNAs. The polypeptide is RNA polymerase II subunit A C-terminal domain phosphatase ssu-72 (ssu-72) (Neurospora crassa (strain ATCC 24698 / 74-OR23-1A / CBS 708.71 / DSM 1257 / FGSC 987)).